Reading from the N-terminus, the 38-residue chain is Toxic protein TimP (38 aa).

The segment at 1 to 20 (MKVRCFCVVLLVSGTLCLHA) is a transmembrane helix.

This sequence belongs to the TimP toxin family.

The protein localises to the cell inner membrane. In terms of biological role, toxic component of a probable type I toxin-antitoxin (TA) system. Neutralized by sRNA antitoxin TimR which binds to the 5' UTR of timP mRNA and inhibits translation. When TimP is expressed from its promoter in the absence of antitoxin leads to mild cell stress; overexpression in situ is toxic to the cell and causes membrane leakage. The antitoxin gene is encoded immediately upstream and transcribed divergently from the toxin gene; antitoxin RNA is less stable than timP mRNA. This chain is Toxic protein TimP, found in Salmonella typhimurium (strain SL1344).